Reading from the N-terminus, the 498-residue chain is ADP,ATP carrier protein 1 (498 aa).

Topologically, residues Met1–Phe33 are cytoplasmic. A helical membrane pass occupies residues Met34 to Val54. A disulfide bridge links Cys37 with Cys85. The Extracellular segment spans residues Thr55–Thr67. The helical transmembrane segment at Tyr68 to Leu88 threads the bilayer. Over Lys89 to Asn92 the chain is Cytoplasmic. The helical transmembrane segment at Ile93–Tyr113 threads the bilayer. Over Pro114–Ser147 the chain is Extracellular. A helical membrane pass occupies residues Phe148 to Trp168. At Gln169–Tyr184 the chain is on the cytoplasmic side. The helical transmembrane segment at Ser185–Phe205 threads the bilayer. The Extracellular portion of the chain corresponds to Leu206–Lys218. Residues Phe219–Trp239 form a helical membrane-spanning segment. Residues Met240–Tyr279 lie on the Cytoplasmic side of the membrane. The helical transmembrane segment at Val280–Val300 threads the bilayer. Residues Trp301–Gly320 lie on the Extracellular side of the membrane. Residues Gln321–Leu341 form a helical membrane-spanning segment. Residues Arg342–Thr348 lie on the Cytoplasmic side of the membrane. The helical transmembrane segment at Ala349–Phe369 threads the bilayer. Over Phe370–Thr379 the chain is Extracellular. Residues Gly380–Leu400 form a helical membrane-spanning segment. Topologically, residues Ser401–Arg438 are cytoplasmic. Gly436–Ser442 provides a ligand contact to ATP. Residues Leu439–Gly459 traverse the membrane as a helical segment. The Extracellular segment spans residues Phe460 to Pro465. A helical transmembrane segment spans residues Tyr466–Asn486. Residues Lys487–Asn498 lie on the Cytoplasmic side of the membrane.

Belongs to the ADP/ATP translocase tlc family.

It is found in the cell membrane. Its function is as follows. Provides the rickettsial cell with host ATP in exchange for rickettsial ADP. This is an obligate exchange system. This energy acquiring activity is an important component of rickettsial parasitism. This chain is ADP,ATP carrier protein 1 (tlcA), found in Rickettsia typhi (strain ATCC VR-144 / Wilmington).